Reading from the N-terminus, the 513-residue chain is 2,3-bisphosphoglycerate-independent phosphoglycerate mutase (513 aa).

Asp14 and Ser64 together coordinate Mn(2+). The active-site Phosphoserine intermediate is the Ser64. Substrate is bound by residues His125, 155 to 156 (RD), Arg187, Arg193, 259 to 262 (RADR), and Lys333. 5 residues coordinate Mn(2+): Asp400, His404, Asp441, His442, and His460.

The protein belongs to the BPG-independent phosphoglycerate mutase family. As to quaternary structure, monomer. Requires Mn(2+) as cofactor.

The catalysed reaction is (2R)-2-phosphoglycerate = (2R)-3-phosphoglycerate. The protein operates within carbohydrate degradation; glycolysis; pyruvate from D-glyceraldehyde 3-phosphate: step 3/5. Catalyzes the interconversion of 2-phosphoglycerate and 3-phosphoglycerate. This Pseudomonas fluorescens (strain ATCC BAA-477 / NRRL B-23932 / Pf-5) protein is 2,3-bisphosphoglycerate-independent phosphoglycerate mutase.